Reading from the N-terminus, the 788-residue chain is Protein translocase subunit SecA 2 (788 aa).

ATP is bound by residues Gln-77, 95 to 99 (GEGKT), and Asp-491.

Belongs to the SecA family. Monomer and homodimer. Part of the essential Sec protein translocation apparatus which comprises SecA, SecYEG and auxiliary proteins SecDF. Other proteins may also be involved.

Its subcellular location is the cell membrane. The protein localises to the cytoplasm. The catalysed reaction is ATP + H2O + cellular proteinSide 1 = ADP + phosphate + cellular proteinSide 2.. Part of the Sec protein translocase complex. Interacts with the SecYEG preprotein conducting channel. Has a central role in coupling the hydrolysis of ATP to the transfer of proteins into and across the cell membrane, serving as an ATP-driven molecular motor driving the stepwise translocation of polypeptide chains across the membrane. The polypeptide is Protein translocase subunit SecA 2 (Lactobacillus johnsonii (strain CNCM I-12250 / La1 / NCC 533)).